A 572-amino-acid chain; its full sequence is Na(+)/citrate cotransporter (572 aa).

The next 8 helical transmembrane spans lie at 13 to 33 (SFVI…LVPD), 53 to 73 (VIPV…LKVL), 80 to 100 (VQYM…ATAV), 124 to 144 (LMLG…NTAT), 218 to 238 (AASI…VLLG), 255 to 275 (SWFA…WLWL), 315 to 335 (PLSY…ILWF), and 357 to 377 (HVTD…VPSQ). Residue asparagine 382 is glycosylated (N-linked (GlcNAc...) asparagine). 4 helical membrane-spanning segments follow: residues 410 to 430 (VPWG…GCET), 443 to 463 (PLSS…VAMT), 491 to 511 (PLYV…LPVA), and 532 to 552 (TGLV…NTWG). N-linked (GlcNAc...) asparagine glycosylation is present at asparagine 566.

The protein belongs to the SLC13A/DASS transporter (TC 2.A.47) family. NADC subfamily. As to quaternary structure, homodimer. In terms of tissue distribution, expressed in liver, testis and brain.

Its subcellular location is the cell membrane. The catalysed reaction is citrate(out) + 4 Na(+)(out) = citrate(in) + 4 Na(+)(in). Inhibited by Li(+). In terms of biological role, high-affinity sodium/citrate cotransporter that mediates citrate entry into cells, which is a critical participant of biochemical pathways. May function in various metabolic processes in which citrate has a critical role such as energy production (Krebs cycle), fatty acid synthesis, cholesterol synthesis, glycolysis, and gluconeogenesis. Transports citrate into the cell in a Na(+)-dependent manner, recognizing the trivalent form of citrate (physiological pH) rather than the divalent form. Can recognize succinate as a substrate, but its affinity for succinate is several fold lower than for citrate. The stoichiometry is probably 4 Na(+) for each carboxylate, irrespective of whether the translocated substrate is divalent or trivalent, rendering the process electrogenic. Involved in the regulation of citrate levels in the brain. This chain is Na(+)/citrate cotransporter (Slc13a5), found in Rattus norvegicus (Rat).